Reading from the N-terminus, the 715-residue chain is Fatty acid oxidation complex subunit alpha (715 aa).

The enoyl-CoA hydratase/isomerase stretch occupies residues 1-190 (MIYEGKAITV…KVGAVDAVVA (190 aa)). Aspartate 297 is a binding site for substrate. Positions 312 to 715 (HDVKQAAVLG…MAKNGQRFFN (404 aa)) are 3-hydroxyacyl-CoA dehydrogenase. NAD(+) contacts are provided by residues methionine 325, aspartate 344, 401 to 403 (VVE), lysine 408, and serine 430. The active-site For 3-hydroxyacyl-CoA dehydrogenase activity is the histidine 451. Asparagine 454 contacts NAD(+). 2 residues coordinate substrate: asparagine 501 and tyrosine 660.

This sequence in the N-terminal section; belongs to the enoyl-CoA hydratase/isomerase family. The protein in the C-terminal section; belongs to the 3-hydroxyacyl-CoA dehydrogenase family. Heterotetramer of two alpha chains (FadB) and two beta chains (FadA).

It catalyses the reaction a (3S)-3-hydroxyacyl-CoA + NAD(+) = a 3-oxoacyl-CoA + NADH + H(+). The enzyme catalyses a (3S)-3-hydroxyacyl-CoA = a (2E)-enoyl-CoA + H2O. The catalysed reaction is a 4-saturated-(3S)-3-hydroxyacyl-CoA = a (3E)-enoyl-CoA + H2O. It carries out the reaction (3S)-3-hydroxybutanoyl-CoA = (3R)-3-hydroxybutanoyl-CoA. It catalyses the reaction a (3Z)-enoyl-CoA = a 4-saturated (2E)-enoyl-CoA. The enzyme catalyses a (3E)-enoyl-CoA = a 4-saturated (2E)-enoyl-CoA. It functions in the pathway lipid metabolism; fatty acid beta-oxidation. Functionally, involved in the aerobic and anaerobic degradation of long-chain fatty acids via beta-oxidation cycle. Catalyzes the formation of 3-oxoacyl-CoA from enoyl-CoA via L-3-hydroxyacyl-CoA. It can also use D-3-hydroxyacyl-CoA and cis-3-enoyl-CoA as substrate. The chain is Fatty acid oxidation complex subunit alpha from Pseudomonas putida (strain GB-1).